A 474-amino-acid polypeptide reads, in one-letter code: 6-phospho-beta-galactosidase (474 aa).

Residues Gln19, His116, Asn159, Glu160, and Asn297 each coordinate D-galactose 6-phosphate. Catalysis depends on Glu160, which acts as the Proton donor. The active-site Nucleophile is Glu375. D-galactose 6-phosphate contacts are provided by Ser433, Trp434, Lys440, and Tyr442.

It belongs to the glycosyl hydrolase 1 family.

It catalyses the reaction a 6-phospho-beta-D-galactoside + H2O = D-galactose 6-phosphate + an alcohol. It participates in carbohydrate metabolism; lactose degradation; D-galactose 6-phosphate and beta-D-glucose from lactose 6-phosphate: step 1/1. This is 6-phospho-beta-galactosidase from Lacticaseibacillus rhamnosus (Lactobacillus rhamnosus).